A 90-amino-acid chain; its full sequence is Small ribosomal subunit protein uS15 (90 aa).

The protein belongs to the universal ribosomal protein uS15 family. Part of the 30S ribosomal subunit. Forms a bridge to the 50S subunit in the 70S ribosome, contacting the 23S rRNA.

In terms of biological role, one of the primary rRNA binding proteins, it binds directly to 16S rRNA where it helps nucleate assembly of the platform of the 30S subunit by binding and bridging several RNA helices of the 16S rRNA. Its function is as follows. Forms an intersubunit bridge (bridge B4) with the 23S rRNA of the 50S subunit in the ribosome. This Mycoplasmoides gallisepticum (strain R(low / passage 15 / clone 2)) (Mycoplasma gallisepticum) protein is Small ribosomal subunit protein uS15.